Here is a 400-residue protein sequence, read N- to C-terminus: Elongation factor Tu (400 aa).

In terms of domain architecture, tr-type G spans lysine 10–glutamate 209. The interval glycine 19 to threonine 26 is G1. Glycine 19–threonine 26 lines the GTP pocket. Threonine 26 contacts Mg(2+). Residues glycine 60–alanine 64 are G2. The G3 stretch occupies residues aspartate 81–glycine 84. Residues aspartate 81–histidine 85 and asparagine 136–aspartate 139 each bind GTP. Residues asparagine 136–aspartate 139 are G4. The interval serine 174–leucine 176 is G5.

It belongs to the TRAFAC class translation factor GTPase superfamily. Classic translation factor GTPase family. EF-Tu/EF-1A subfamily. In terms of assembly, monomer.

It localises to the cytoplasm. The catalysed reaction is GTP + H2O = GDP + phosphate + H(+). Functionally, GTP hydrolase that promotes the GTP-dependent binding of aminoacyl-tRNA to the A-site of ribosomes during protein biosynthesis. The sequence is that of Elongation factor Tu from Moorella thermoacetica (strain ATCC 39073 / JCM 9320).